Consider the following 314-residue polypeptide: L-lactate dehydrogenase (314 aa).

Residues V17, D38, K43, Y69, and 83–84 contribute to the NAD(+) site; that span reads GA. The substrate site is built by Q86 and R92. NAD(+) is bound by residues S105, 122 to 124, and S147; that span reads ASN. Residue 124-127 participates in substrate binding; it reads NPVD. 152–155 provides a ligand contact to substrate; the sequence is DSAR. Beta-D-fructose 1,6-bisphosphate-binding residues include R157 and H172. Residue H179 is the Proton acceptor of the active site. Position 223 is a phosphotyrosine (Y223). Substrate is bound at residue T232.

Belongs to the LDH/MDH superfamily. LDH family. In terms of assembly, homotetramer.

The protein localises to the cytoplasm. It catalyses the reaction (S)-lactate + NAD(+) = pyruvate + NADH + H(+). It participates in fermentation; pyruvate fermentation to lactate; (S)-lactate from pyruvate: step 1/1. Its activity is regulated as follows. Allosterically activated by fructose 1,6-bisphosphate (FBP). Its function is as follows. Catalyzes the conversion of lactate to pyruvate. The protein is L-lactate dehydrogenase of Corynebacterium glutamicum (strain ATCC 13032 / DSM 20300 / JCM 1318 / BCRC 11384 / CCUG 27702 / LMG 3730 / NBRC 12168 / NCIMB 10025 / NRRL B-2784 / 534).